A 324-amino-acid chain; its full sequence is Cytochrome c biogenesis protein CcsA (324 aa).

Helical transmembrane passes span 17–37 (IISVVIIIQLMTFFVHEIPAL), 44–64 (GMIATFLSITGLLIIRWIYSG), 68–88 (LSNLYESLMFLSWSFAIIHMI), 99–119 (YLSAITIPSAIFTQAFATSGL), 145–165 (MLLSYAALLVGSLFSIALLVI), 230–250 (VISIGFSFLTIGILSGAVWAN), 264–278 (TWAFITWTIYAIYSH), and 291–311 (AIVASIGFFIIWICYFGVNLL).

Belongs to the CcmF/CycK/Ccl1/NrfE/CcsA family. As to quaternary structure, may interact with Ccs1.

It is found in the plastid. The protein resides in the chloroplast thylakoid membrane. Functionally, required during biogenesis of c-type cytochromes (cytochrome c6 and cytochrome f) at the step of heme attachment. This chain is Cytochrome c biogenesis protein CcsA, found in Lemna minor (Common duckweed).